A 327-amino-acid polypeptide reads, in one-letter code: MSSQFDQLKLWSVLVGDTGDPALIKTLGVQDATTNPSLILKVAQEPKYQSMLTEAISWGIRQNGDDVQTLTFVLDKIQVNLGLEILKHVPGRVSLEIDARLSFNTEAMVQRAIFLSQLFEKMGGDKKRLLVKIPGTWEGICAAEVLESQGIACNVTLIFNLVQAIAAAKAKVTLVSPFVGRIYDWWIAAYGAEGYSIEADPGVASVANIYSYYKKFDIPTQIMAASFRTKEQVLALAGCDFLTISPKLLEELKKDQQPVERKLSVEEAKKLDIQPVELSESVFRFLMNEDAMATEKLAEGIRIFSGDTQILESAVTEFIRQIAAQEA.

Lys-132 acts as the Schiff-base intermediate with substrate in catalysis.

Belongs to the transaldolase family. Type 1 subfamily.

Its subcellular location is the cytoplasm. The enzyme catalyses D-sedoheptulose 7-phosphate + D-glyceraldehyde 3-phosphate = D-erythrose 4-phosphate + beta-D-fructose 6-phosphate. The protein operates within carbohydrate degradation; pentose phosphate pathway; D-glyceraldehyde 3-phosphate and beta-D-fructose 6-phosphate from D-ribose 5-phosphate and D-xylulose 5-phosphate (non-oxidative stage): step 2/3. In terms of biological role, transaldolase is important for the balance of metabolites in the pentose-phosphate pathway. The protein is Transaldolase of Chlamydia trachomatis serovar D (strain ATCC VR-885 / DSM 19411 / UW-3/Cx).